The sequence spans 348 residues: MTLTTATSGAIVFSGATLLVSLFAAASLYSQVSNIWNELDAEIANFRSLTEDMWVDMVKLGAGTASNRVRRQQYGGYGATGVQPPAPTPNPYGGYGASQPAPPEKFPDGIPNGGNQPKFPGGGFPDGPFPNGGGPRGGNQCQCTVENSCPPGPAGPEGEEGPDGHDGQDGVPGFDGKDAEDVQNTPPTGCFTCPQGPLGPQGPNGAPGLRGMRGARGQPGRPGRDGNPGMPGDCGPPGAPGSDGKPGSPGGKGDDGERPLGRPGPRGPPGEAGPEGPQGPTGRDAYPGQSGPQGEPGLQGYGGAAGEDGPEGPPGAPGLPGKDAEYCKCPGREGDAGRSARRHRKFQL.

Residues 76-348 (GYGATGVQPP…SARRHRKFQL (273 aa)) form a disordered region. Over residues 120 to 137 (PGGGFPDGPFPNGGGPRG) the composition is skewed to gly residues. Triple-helical region regions lie at residues 152-178 (GPAGPEGEEGPDGHDGQDGVPGFDGKD), 196-258 (GPLG…DGER), 261-284 (GRPGPRGPPGEAGPEGPQGPTGRD), and 288-323 (GQSGPQGEPGLQGYGGAAGEDGPEGPPGAPGLPGKD). The segment covering 194–231 (PQGPLGPQGPNGAPGLRGMRGARGQPGRPGRDGNPGMP) has biased composition (low complexity). Gly residues predominate over residues 297 to 306 (GLQGYGGAAG). The segment covering 322-338 (KDAEYCKCPGREGDAGR) has biased composition (basic and acidic residues). The span at 339–348 (SARRHRKFQL) shows a compositional bias: basic residues.

Belongs to the cuticular collagen family. In terms of assembly, collagen polypeptide chains are complexed within the cuticle by disulfide bonds and other types of covalent cross-links. Localizes in stripes along the alae.

In terms of biological role, nematode cuticles are composed largely of collagen-like proteins. The cuticle functions both as an exoskeleton and as a barrier to protect the worm from its environment. May play a role in cuticle remodeling in response to the environment. Involved in body morphogenesis. This Caenorhabditis elegans protein is Cuticle collagen rol-6 (rol-6).